The chain runs to 208 residues: Small ribosomal subunit protein uS4 (208 aa).

The 61-residue stretch at Arg98–Asn158 folds into the S4 RNA-binding domain.

This sequence belongs to the universal ribosomal protein uS4 family. Part of the 30S ribosomal subunit. Contacts protein S5. The interaction surface between S4 and S5 is involved in control of translational fidelity.

One of the primary rRNA binding proteins, it binds directly to 16S rRNA where it nucleates assembly of the body of the 30S subunit. Its function is as follows. With S5 and S12 plays an important role in translational accuracy. The chain is Small ribosomal subunit protein uS4 from Geobacter metallireducens (strain ATCC 53774 / DSM 7210 / GS-15).